We begin with the raw amino-acid sequence, 107 residues long: Guanine nucleotide-binding protein G(I)/G(S)/G(O) subunit gamma-14 (107 aa).

One can recognise a G protein gamma domain in the interval 69–107 (KMAADLLKFCTEQAKNDPFLVGIPAATNSFKEKKPYAIL).

It belongs to the G protein gamma family. In terms of assembly, g proteins are composed of 3 units; alpha, beta and gamma.

The protein localises to the cell membrane. Functionally, guanine nucleotide-binding proteins (G proteins) are involved as a modulator or transducer in various transmembrane signaling systems. The beta and gamma chains are required for the GTPase activity, for replacement of GDP by GTP, and for G protein-effector interaction. This is Guanine nucleotide-binding protein G(I)/G(S)/G(O) subunit gamma-14 from Homo sapiens (Human).